The chain runs to 630 residues: Biosynthetic arginine decarboxylase (630 aa).

Position 99 is an N6-(pyridoxal phosphate)lysine (K99). Residue 281–291 coordinates substrate; sequence VDIGGGLGVDY.

It belongs to the Orn/Lys/Arg decarboxylase class-II family. SpeA subfamily. Mg(2+) serves as cofactor. The cofactor is pyridoxal 5'-phosphate.

It catalyses the reaction L-arginine + H(+) = agmatine + CO2. It functions in the pathway amine and polyamine biosynthesis; agmatine biosynthesis; agmatine from L-arginine: step 1/1. Catalyzes the biosynthesis of agmatine from arginine. In Bacteroides fragilis (strain ATCC 25285 / DSM 2151 / CCUG 4856 / JCM 11019 / LMG 10263 / NCTC 9343 / Onslow / VPI 2553 / EN-2), this protein is Biosynthetic arginine decarboxylase.